Consider the following 411-residue polypeptide: Citrate synthase (411 aa).

Catalysis depends on residues His304 and Asp363.

This sequence belongs to the citrate synthase family.

The catalysed reaction is oxaloacetate + acetyl-CoA + H2O = citrate + CoA + H(+). It participates in carbohydrate metabolism; tricarboxylic acid cycle; isocitrate from oxaloacetate: step 1/2. This chain is Citrate synthase (gltA), found in Rickettsia parkeri.